A 341-amino-acid chain; its full sequence is S-adenosylmethionine:tRNA ribosyltransferase-isomerase (341 aa).

This sequence belongs to the QueA family. As to quaternary structure, monomer.

It is found in the cytoplasm. The enzyme catalyses 7-aminomethyl-7-carbaguanosine(34) in tRNA + S-adenosyl-L-methionine = epoxyqueuosine(34) in tRNA + adenine + L-methionine + 2 H(+). Its pathway is tRNA modification; tRNA-queuosine biosynthesis. Functionally, transfers and isomerizes the ribose moiety from AdoMet to the 7-aminomethyl group of 7-deazaguanine (preQ1-tRNA) to give epoxyqueuosine (oQ-tRNA). The polypeptide is S-adenosylmethionine:tRNA ribosyltransferase-isomerase (Desulforamulus reducens (strain ATCC BAA-1160 / DSM 100696 / MI-1) (Desulfotomaculum reducens)).